The sequence spans 334 residues: Methionine adenosyltransferase 2 subunit beta (334 aa).

Residues 37-40 (TGLL), 60-62 (FRR), 71-72 (NL), Cys93, Arg97, Tyr159, and Leu185 contribute to the NADP(+) site. A Phosphothreonine modification is found at Thr309. The tract at residues 319 to 334 (LWPFLIDKRWRQTVFH) is required for interaction with MAT2A.

Belongs to the dTDP-4-dehydrorhamnose reductase family. MAT2B subfamily. In terms of assembly, heterotrimer; composed of a catalytic MAT2A homodimer that binds one regulatory MAT2B chain. Heterohexamer; composed of a central, catalytic MAT2A homotetramer flanked on either side by a regulatory MAT2B chain. NADP binding increases the affinity for MAT2A.

It participates in amino-acid biosynthesis; S-adenosyl-L-methionine biosynthesis; S-adenosyl-L-methionine from L-methionine: step 1/1. In terms of biological role, regulatory subunit of S-adenosylmethionine synthetase 2, an enzyme that catalyzes the formation of S-adenosylmethionine from methionine and ATP. Regulates MAT2A catalytic activity by changing its kinetic properties, increasing its affinity for L-methionine. Can bind NADP (in vitro). This Mus musculus (Mouse) protein is Methionine adenosyltransferase 2 subunit beta (Mat2b).